Consider the following 379-residue polypeptide: DNA replication and repair protein RecF (379 aa).

34-41 (GDNGAGKT) is a binding site for ATP.

This sequence belongs to the RecF family.

It is found in the cytoplasm. The RecF protein is involved in DNA metabolism; it is required for DNA replication and normal SOS inducibility. RecF binds preferentially to single-stranded, linear DNA. It also seems to bind ATP. The chain is DNA replication and repair protein RecF from Mesorhizobium japonicum (strain LMG 29417 / CECT 9101 / MAFF 303099) (Mesorhizobium loti (strain MAFF 303099)).